The sequence spans 360 residues: Phospho-N-acetylmuramoyl-pentapeptide-transferase (360 aa).

10 helical membrane-spanning segments follow: residues 27–47, 71–91, 97–117, 132–152, 168–188, 199–219, 236–256, 263–283, 288–308, and 338–358; these read IVGLLTALIIALWMGPHLIAW, TPTMGGIMILFSIAVSTLLWA, YVWCVLLVLIGYGIIGFIDDY, WKYFWQSVLALAVAFSMYAIG, VMPQLGMLYILLAYFVIVGTS, GLAIMPTVFVAAGFALVAWAT, AGELVIVCTAIVGAGLGFLWF, VFMGDVGSLALGGALGTIAVL, FLLVIMGGVFVVETLSVILQV, and VIVRFWIISLMLVLIGLATLK.

This sequence belongs to the glycosyltransferase 4 family. MraY subfamily. The cofactor is Mg(2+).

It is found in the cell inner membrane. The catalysed reaction is UDP-N-acetyl-alpha-D-muramoyl-L-alanyl-gamma-D-glutamyl-meso-2,6-diaminopimeloyl-D-alanyl-D-alanine + di-trans,octa-cis-undecaprenyl phosphate = di-trans,octa-cis-undecaprenyl diphospho-N-acetyl-alpha-D-muramoyl-L-alanyl-D-glutamyl-meso-2,6-diaminopimeloyl-D-alanyl-D-alanine + UMP. It participates in cell wall biogenesis; peptidoglycan biosynthesis. Catalyzes the initial step of the lipid cycle reactions in the biosynthesis of the cell wall peptidoglycan: transfers peptidoglycan precursor phospho-MurNAc-pentapeptide from UDP-MurNAc-pentapeptide onto the lipid carrier undecaprenyl phosphate, yielding undecaprenyl-pyrophosphoryl-MurNAc-pentapeptide, known as lipid I. The protein is Phospho-N-acetylmuramoyl-pentapeptide-transferase of Proteus mirabilis (strain HI4320).